The following is a 499-amino-acid chain: Protein-tyrosine sulfotransferase (499 aa).

Residues 1–9 are Cytoplasmic-facing; that stretch reads MRLPYRNKK. The helical; Signal-anchor for type II membrane protein transmembrane segment at 10-30 threads the bilayer; sequence VTLWVLFGIIVITMFLFKFTE. Residues 31 to 499 are Lumenal-facing; it reads LRPTCLFKVD…NIMEDPMADT (469 aa). Position 80–84 (80–84) interacts with 3'-phosphoadenylyl sulfate; that stretch reads RSGTT. Cysteines 98 and 158 form a disulfide. Glu101 serves as the catalytic Proton donor/acceptor. Residues 103–107 form an interaction with peptide substrate region; the sequence is RVIPR. 3 residues coordinate 3'-phosphoadenylyl sulfate: Arg185, Ser193, and Arg197. A disulfide bond links Cys227 and Cys235. Residues Tyr240, 287-296, and Lys302 each bind 3'-phosphoadenylyl sulfate; that span reads SSDQVIKPVN. 2 N-linked (GlcNAc...) asparagine glycosylation sites follow: Asn346 and Asn380. 2 disordered regions span residues 362–460 and 476–499; these read KQVL…QKPK and NNINNNINNNNNNNNIMEDPMADT. 2 stretches are compositionally biased toward low complexity: residues 375–400 and 408–434; these read TNTIINNSNNKDNNNNQYTINKIIPE and HVQQQHLQQQQQQHLQQQQHQRQQQQQ. Over residues 443-460 the composition is skewed to basic and acidic residues; sequence EREAEPDREQQLLHQKPK. Residues 476–491 show a composition bias toward low complexity; it reads NNINNNINNNNNNNNI.

It belongs to the protein sulfotransferase family.

Its subcellular location is the golgi apparatus membrane. It carries out the reaction L-tyrosyl-[protein] + 3'-phosphoadenylyl sulfate = O-sulfo-L-tyrosine-[protein] + adenosine 3',5'-bisphosphate + H(+). In terms of biological role, catalyzes the O-sulfation of tyrosine residues within acidic motifs of polypeptides. Has a role in protein secretion. In Drosophila melanogaster (Fruit fly), this protein is Protein-tyrosine sulfotransferase.